Consider the following 243-residue polypeptide: UPF0173 metal-dependent hydrolase Xaut_3786 (243 aa).

The protein belongs to the UPF0173 family.

In Xanthobacter autotrophicus (strain ATCC BAA-1158 / Py2), this protein is UPF0173 metal-dependent hydrolase Xaut_3786.